We begin with the raw amino-acid sequence, 92 residues long: Acylphosphatase (92 aa).

Positions Thr5 to Pro90 constitute an Acylphosphatase-like domain. Active-site residues include Arg20 and Asn38.

Belongs to the acylphosphatase family.

It catalyses the reaction an acyl phosphate + H2O = a carboxylate + phosphate + H(+). This chain is Acylphosphatase (acyP), found in Cupriavidus necator (strain ATCC 17699 / DSM 428 / KCTC 22496 / NCIMB 10442 / H16 / Stanier 337) (Ralstonia eutropha).